The sequence spans 274 residues: Protein LNK4 (274 aa).

The interval 209 to 249 (NSQQKSDSNSDEFLEDRTRETEFETKLNRQSRGQSHIQQDG) is disordered. Basic and acidic residues predominate over residues 223-235 (EDRTRETEFETKL). Residues 236 to 249 (NRQSRGQSHIQQDG) are compositionally biased toward polar residues.

As to quaternary structure, interacts with REV8.

In terms of biological role, probable transcriptional coactivator. This chain is Protein LNK4, found in Arabidopsis thaliana (Mouse-ear cress).